The chain runs to 246 residues: Dehydration-responsive element-binding protein 1H (246 aa).

The segment at 1 to 43 (MDMAGHEVNSSSSSSGAESSSSSSGRQQYKKRPAGRTKFRETR) is disordered. Residues 10-24 (SSSSSSGAESSSSSS) show a composition bias toward low complexity. The segment covering 28–37 (QYKKRPAGRT) has biased composition (basic residues). Residues 46–110 (VYRGVRRRGG…GGGAACLNFQ (65 aa)) constitute a DNA-binding region (AP2/ERF). The interval 155 to 187 (AMDEATSGVSAPPPLANNAGSSETPGPSSIDGT) is disordered. Residues 172 to 181 (NAGSSETPGP) are compositionally biased toward polar residues.

The protein belongs to the AP2/ERF transcription factor family. ERF subfamily.

It is found in the nucleus. Transcriptional activator that binds specifically to the DNA sequence 5'-[AG]CCGAC-3'. Binding to the C-repeat/DRE element mediates high salinity- and dehydration-inducible transcription. This Oryza sativa subsp. indica (Rice) protein is Dehydration-responsive element-binding protein 1H (DREB1H).